Here is a 450-residue protein sequence, read N- to C-terminus: Glucose-6-phosphate isomerase (450 aa).

Residue threonine 38 is modified to Phosphothreonine. Residue glutamate 290 is the Proton donor of the active site. Residues histidine 311 and lysine 425 contribute to the active site.

It belongs to the GPI family.

It is found in the cytoplasm. It carries out the reaction alpha-D-glucose 6-phosphate = beta-D-fructose 6-phosphate. It participates in carbohydrate biosynthesis; gluconeogenesis. The protein operates within carbohydrate degradation; glycolysis; D-glyceraldehyde 3-phosphate and glycerone phosphate from D-glucose: step 2/4. Catalyzes the reversible isomerization of glucose-6-phosphate to fructose-6-phosphate. The protein is Glucose-6-phosphate isomerase of Bacillus licheniformis (strain ATCC 14580 / DSM 13 / JCM 2505 / CCUG 7422 / NBRC 12200 / NCIMB 9375 / NCTC 10341 / NRRL NRS-1264 / Gibson 46).